The chain runs to 274 residues: MAD2L1-binding protein (274 aa).

The interval 45 to 78 (ASEAFCPRDCMVPVVFPGPVSQEGCCQFTCELLK) is interaction with MAD2L1. S102 is subject to Phosphoserine.

It belongs to the MAD2L1BP family. As to quaternary structure, interacts with MAD2L1.

The protein localises to the nucleus. It localises to the cytoplasm. The protein resides in the cytoskeleton. Its subcellular location is the spindle. Its function is as follows. May function to silence the spindle checkpoint and allow mitosis to proceed through anaphase by binding MAD2L1 after it has become dissociated from the MAD2L1-CDC20 complex. This is MAD2L1-binding protein (MAD2L1BP) from Homo sapiens (Human).